A 211-amino-acid chain; its full sequence is SAGA-associated factor 11 homolog 1 (211 aa).

The segment at 115–136 (CTCPNCDRLVAAARFAPHLEKC) adopts an SGF11-type zinc-finger fold. The disordered stretch occupies residues 149–211 (RRLATKEGSS…GSKKNNGKTF (63 aa)). Positions 157 to 166 (SSASTSSTST) are enriched in low complexity. S187 bears the Phosphoserine mark. A compositionally biased stretch (low complexity) spans 197 to 211 (SSRNNGSKKNNGKTF).

Belongs to the SGF11 family. Component of some SAGA transcription coactivator-HAT complexes, at least composed of Ada2b, not/nonstop, Pcaf/Gcn5, Sgf11 and Spt3. Within the SAGA complex, Sgf11, e(y)2, and not/nonstop form an additional subcomplex of SAGA called the DUB module (deubiquitination module). Interacts directly with not/nonstop. Interacts with the AMEX complex component xmas-2. Interacts with Cbp80; important for promoter recruitment of Sgf11 that is not associated with the DUB module.

The protein resides in the nucleus. It is found in the nucleoplasm. Its subcellular location is the cytoplasm. Component of the transcription regulatory histone acetylation (HAT) complex SAGA, a multiprotein complex that activates transcription by remodeling chromatin and mediating histone acetylation and deubiquitination. Within the SAGA complex, participates in a subcomplex that specifically deubiquitinates histone H2B. The SAGA complex is recruited to specific gene promoters by activators, where it is required for transcription. Required for nuclear receptor-mediated transactivation. Binds independently on SAGA to promoters in an RNA-dependent manner. Binds to mRNA and is essential for total mRNA export from the nucleus. Required to counteract heterochromatin silencing. Controls the development of neuronal connectivity in visual system by being required for accurate axon targeting in the optic lobe. Required for expression of ecdysone-induced genes such as br/broad. The chain is SAGA-associated factor 11 homolog 1 from Drosophila grimshawi (Hawaiian fruit fly).